The chain runs to 264 residues: ATP synthase subunit a (264 aa).

A run of 7 helical transmembrane segments spans residues 29–49, 90–110, 111–131, 134–154, 177–197, 208–228, and 235–255; these read TWHIDSLLFSVGLGVLFLWIF, IAPLALTIFVWVFMMNFMDMI, PVDWLPSLALLAGVEYLKVVP, DVNITFSLAIGVFVLIIYYSI, IPVNLLLESVTLIAKPISLAL, LIFILIALMYSANWAMATLGV, and LIFHILVITLQAFIFMMLTIV.

Belongs to the ATPase A chain family. As to quaternary structure, F-type ATPases have 2 components, CF(1) - the catalytic core - and CF(0) - the membrane proton channel. CF(1) has five subunits: alpha(3), beta(3), gamma(1), delta(1), epsilon(1). CF(0) has three main subunits: a(1), b(2) and c(9-12). The alpha and beta chains form an alternating ring which encloses part of the gamma chain. CF(1) is attached to CF(0) by a central stalk formed by the gamma and epsilon chains, while a peripheral stalk is formed by the delta and b chains.

The protein resides in the cell inner membrane. Functionally, key component of the proton channel; it plays a direct role in the translocation of protons across the membrane. The sequence is that of ATP synthase subunit a from Shewanella denitrificans (strain OS217 / ATCC BAA-1090 / DSM 15013).